We begin with the raw amino-acid sequence, 341 residues long: tRNA N6-adenosine threonylcarbamoyltransferase (341 aa).

Positions 111 and 115 each coordinate Fe cation. Residues 134 to 138 (LVSGG), aspartate 167, glycine 180, and asparagine 272 contribute to the substrate site. Aspartate 300 serves as a coordination point for Fe cation.

This sequence belongs to the KAE1 / TsaD family. Fe(2+) serves as cofactor.

The protein resides in the cytoplasm. It carries out the reaction L-threonylcarbamoyladenylate + adenosine(37) in tRNA = N(6)-L-threonylcarbamoyladenosine(37) in tRNA + AMP + H(+). Its function is as follows. Required for the formation of a threonylcarbamoyl group on adenosine at position 37 (t(6)A37) in tRNAs that read codons beginning with adenine. Is involved in the transfer of the threonylcarbamoyl moiety of threonylcarbamoyl-AMP (TC-AMP) to the N6 group of A37, together with TsaE and TsaB. TsaD likely plays a direct catalytic role in this reaction. The protein is tRNA N6-adenosine threonylcarbamoyltransferase of Edwardsiella ictaluri (strain 93-146).